The sequence spans 1123 residues: Adenylyl cyclase X E (1123 aa).

At 1–47 the chain is on the cytoplasmic side; it reads MPRSLGNCQLNYSKERMWEPGYLKAKCAELRLESEFRLYRIRLWKSY. A helical transmembrane segment spans residues 48-68; that stretch reads LLTFFMLHIFVTSVHCALLLA. At 69–73 the chain is on the extracellular side; that stretch reads TIERR. A helical membrane pass occupies residues 74–94; the sequence is SIIYFDVALSIGCALVLILVL. Over 95–106 the chain is Cytoplasmic; it reads SVNFCDEFIAKH. Residues 107–127 traverse the membrane as a helical segment; it reads TWYMYASSIFASLTLVFADLT. Over 128–137 the chain is Extracellular; sequence ESIYHTYAHS. The helical transmembrane segment at 138-158 threads the bilayer; sequence WILGTFYDTYIIYMIYMFLPI. The Cytoplasmic portion of the chain corresponds to 159–163; that stretch reads HFISG. The helical transmembrane segment at 164-184 threads the bilayer; that stretch reads AVLLALLVSGLYILYFVIFIA. Residues 185-196 are Extracellular-facing; sequence QGFAQFASALFS. Residues 197–217 form a helical membrane-spanning segment; the sequence is VGGMSVDIVHYLCLNLVGIFY. Residues 218–581 lie on the Cytoplasmic side of the membrane; the sequence is RVMNDTVVRS…YLKQTDYMYK (364 aa). Residues 346 to 348 and arginine 392 contribute to the ATP site; that span reads LGD. Aspartate 348 serves as a coordination point for Mg(2+). The helical transmembrane segment at 582 to 602 threads the bilayer; it reads YSIILSASVGCSLVYIELMDT. At 603 to 608 the chain is on the extracellular side; that stretch reads QMICSS. Residues 609 to 629 traverse the membrane as a helical segment; sequence CFVLPASVATIQCILALIAWY. At 630–667 the chain is on the cytoplasmic side; sequence KKYCWTRYGRNNVPHHYNGFSCFIFRIHDKILNSLPIR. The helical transmembrane segment at 668–688 threads the bilayer; it reads ICIYLFLMISSFFVMCLIVMS. Residues 689-719 are Extracellular-facing; it reads CQREEFEMAYIEERLFHYEQEAHICFHPWVT. The chain crosses the membrane as a helical span at residues 720-740; that stretch reads TNMLSLMICLTFTFAHIPIMV. Over 741–743 the chain is Cytoplasmic; it reads KTA. The chain crosses the membrane as a helical span at residues 744–764; it reads VAILETLAYLLLIFFQFDFVF. Topologically, residues 765–772 are extracellular; that stretch reads HHSVTTNP. A helical membrane pass occupies residues 773–793; sequence YFKSEYAHALLICITFLIMFV. At 794 to 1123 the chain is on the cytoplasmic side; the sequence is KERQIEFTNK…STSRHTLQSL (330 aa). ATP is bound by residues lysine 903, 1014-1016, 1021-1025, and lysine 1061; these read DIW and NMASR.

It belongs to the adenylyl cyclase class-4/guanylyl cyclase family. As to expression, expressed in labella.

The protein localises to the membrane. The enzyme catalyses ATP = 3',5'-cyclic AMP + diphosphate. Its function is as follows. Catalyzes the formation of the signaling molecule cAMP in response to G-protein signaling. The sequence is that of Adenylyl cyclase X E from Drosophila melanogaster (Fruit fly).